The following is a 151-amino-acid chain: Chaperonin GroEL (151 aa).

Residue 41–45 coordinates ATP; it reads DGTTT.

The protein belongs to the chaperonin (HSP60) family. Forms a cylinder of 14 subunits composed of two heptameric rings stacked back-to-back. Interacts with the co-chaperonin GroES.

The protein localises to the cytoplasm. The enzyme catalyses ATP + H2O + a folded polypeptide = ADP + phosphate + an unfolded polypeptide.. Its function is as follows. Together with its co-chaperonin GroES, plays an essential role in assisting protein folding. The GroEL-GroES system forms a nano-cage that allows encapsulation of the non-native substrate proteins and provides a physical environment optimized to promote and accelerate protein folding. The polypeptide is Chaperonin GroEL (Mycobacterium marinum).